Here is a 661-residue protein sequence, read N- to C-terminus: Glycogen debranching enzyme (661 aa).

Asp-338 serves as the catalytic Nucleophile. Catalysis depends on Glu-373, which acts as the Proton donor. Residues 460-481 form a disordered region; sequence NQLNGEGNRDGSDRNFSNNHGV.

The protein belongs to the glycosyl hydrolase 13 family.

It catalyses the reaction Hydrolysis of (1-&gt;6)-alpha-D-glucosidic linkages to branches with degrees of polymerization of three or four glucose residues in limit dextrin.. Its pathway is glycan degradation; glycogen degradation. Functionally, removes maltotriose and maltotetraose chains that are attached by 1,6-alpha-linkage to the limit dextrin main chain, generating a debranched limit dextrin. The protein is Glycogen debranching enzyme of Serratia proteamaculans (strain 568).